Reading from the N-terminus, the 554-residue chain is Peroxisomal membrane protein PEX29 (554 aa).

Residues 1-145 (MDSVTNFFWN…PFMIMDELIK (145 aa)) are Cytoplasmic-facing. Composition is skewed to polar residues over residues 11 to 22 (DTYNAGTPTRST) and 43 to 53 (ISSGSRTSDPT). The segment at 11–73 (DTYNAGTPTR…PTSGGGFPST (63 aa)) is disordered. Positions 55–64 (GSLPSSSGQP) are enriched in low complexity. The chain crosses the membrane as a helical span at residues 146-166 (ILNWTNPAYTVSIMFLYTLII). The Peroxisomal segment spans residues 167–172 (LKPFQM). A helical membrane pass occupies residues 173 to 193 (LSSLPIFYLLFCVMVPQYLYI). Over 194–264 (HKPNPTSYLD…LQKFAFFTNE (71 aa)) the chain is Cytoplasmic. Residues 265-285 (AISSFYFIVLLIIATLNFLYM) traverse the membrane as a helical segment. Residues 286–287 (DK) lie on the Peroxisomal side of the membrane. A helical membrane pass occupies residues 288–308 (FIKLIPMRPVLILLGWGFFIA). Residues 309 to 554 (SHPSNREYLL…ELTDTLNSTI (246 aa)) are Cytoplasmic-facing. The disordered stretch occupies residues 500–532 (GVTKGSMSGGLTHSSDDDRADEESINGTIPNLN).

This sequence belongs to the PEX28-32 family. PEX29 subfamily.

Its subcellular location is the peroxisome membrane. Its function is as follows. Involved in the regulation of peroxisome number, size and distribution. The protein is Peroxisomal membrane protein PEX29 (PEX29) of Saccharomyces cerevisiae (strain ATCC 204508 / S288c) (Baker's yeast).